A 243-amino-acid polypeptide reads, in one-letter code: MGKYNLTALQVRKTAIDSIAAGKKGDLPRWVNVVGDIPPAQILVRERPQQHPLVRQRMKTIPGNPTPQPVFQVQTKRVKPKKASRMFLPVEIKYEEDQLRKEFFRDHPWELARPRILVESSGKDSERYNWSRMQQPGKKLDGESVVQRQLWLLNNVPDMTKSRAYDIARREFYRLRLQEDIERRVAVEEAEATGAVFGPSRLEIGMELENQQFEAWKSWAKTEAQIVDQASTSEDGSENQSLP.

It belongs to the mitochondrion-specific ribosomal protein mS23 family. In terms of assembly, component of the mitochondrial small ribosomal subunit.

It is found in the mitochondrion. This chain is Small ribosomal subunit protein mS23 (rsm25), found in Emericella nidulans (strain FGSC A4 / ATCC 38163 / CBS 112.46 / NRRL 194 / M139) (Aspergillus nidulans).